The chain runs to 409 residues: uncharacterized protein (409 aa).

Residues 1–26 (MKKELLASLVLCLSLSPLVSTNEVFA) form the signal peptide.

This is an uncharacterized protein from Bacillus subtilis (strain 168).